The chain runs to 354 residues: Uroporphyrinogen decarboxylase (354 aa).

Residues 27–31 (RQAGR), F46, D77, Y154, T209, and H327 contribute to the substrate site.

The protein belongs to the uroporphyrinogen decarboxylase family. In terms of assembly, homodimer.

The protein resides in the cytoplasm. It carries out the reaction uroporphyrinogen III + 4 H(+) = coproporphyrinogen III + 4 CO2. The protein operates within porphyrin-containing compound metabolism; protoporphyrin-IX biosynthesis; coproporphyrinogen-III from 5-aminolevulinate: step 4/4. Its function is as follows. Catalyzes the decarboxylation of four acetate groups of uroporphyrinogen-III to yield coproporphyrinogen-III. This chain is Uroporphyrinogen decarboxylase, found in Pseudomonas putida (strain ATCC 47054 / DSM 6125 / CFBP 8728 / NCIMB 11950 / KT2440).